We begin with the raw amino-acid sequence, 254 residues long: MNNVSMRELLEAGAHFGHRTRFWNPKMSEYIFGSRNKIHIINLEKTLPMLNDVTNYVSRLAANKAKILFVGTKRAAQDSIREHAKRCGMPYVDHRWLGGMLTNYKTVRQSIFRLKELKEMKEKGLFNDMIKKEALMLTRELEKLERSLGGIENMGGLPDALFVVDVGFEHIAVEEARRLRIPVIGVVDTNNSPDNIDYVIPGNDDSMRAVDIYVRCVADAILDGKNSNTVGRVSSDSEFVEVTSNSNEEEKSGE.

The protein belongs to the universal ribosomal protein uS2 family.

This chain is Small ribosomal subunit protein uS2, found in Legionella pneumophila (strain Corby).